Here is a 198-residue protein sequence, read N- to C-terminus: Autophagy-related protein 16 (198 aa).

Residues 24-177 (ELVQTCSQMA…NKELVDRWMK (154 aa)) adopt a coiled-coil conformation.

This sequence belongs to the ATG16 family. As to quaternary structure, homodimer. Part of the ATG5-ATG12/ATG16 complex. Several units of each may be present in this complex. Interacts directly with ATG12.

The protein resides in the preautophagosomal structure membrane. Stabilizes the ATG5-ATG12 conjugate. The ATG5-ATG12/ATG16 complex is required for efficient promotion of ATG8-conjugation to phosphatidylethanolamine and ATG8 localization to the pre-autophagosomal structure (PAS). Also recruits ATG3 to the PAS. Involved in endoplasmic reticulum-specific autophagic process and is essential for the survival of cells subjected to severe ER stress. Autophagy is required for proper vegetative growth, asexual/sexual reproduction, and full virulence. Autophagy is particularly involved in the biosynthesis of deoxynivalenol (DON), an important virulence determinant. The protein is Autophagy-related protein 16 of Gibberella zeae (strain ATCC MYA-4620 / CBS 123657 / FGSC 9075 / NRRL 31084 / PH-1) (Wheat head blight fungus).